The chain runs to 154 residues: Myoglobin (154 aa).

Residues 2–148 (GLSDGEWQLV…FRNDIAAKYK (147 aa)) enclose the Globin domain. Phosphoserine is present on Ser4. Residue His65 coordinates nitrite. His65 contributes to the O2 binding site. Phosphothreonine is present on Thr68. His94 provides a ligand contact to heme b.

This sequence belongs to the globin family. In terms of assembly, monomeric.

It is found in the cytoplasm. It localises to the sarcoplasm. It catalyses the reaction Fe(III)-heme b-[protein] + nitric oxide + H2O = Fe(II)-heme b-[protein] + nitrite + 2 H(+). The catalysed reaction is H2O2 + AH2 = A + 2 H2O. Functionally, monomeric heme protein which primary function is to store oxygen and facilitate its diffusion within muscle tissues. Reversibly binds oxygen through a pentacoordinated heme iron and enables its timely and efficient release as needed during periods of heightened demand. Depending on the oxidative conditions of tissues and cells, and in addition to its ability to bind oxygen, it also has a nitrite reductase activity whereby it regulates the production of bioactive nitric oxide. Under stress conditions, like hypoxia and anoxia, it also protects cells against reactive oxygen species thanks to its pseudoperoxidase activity. The polypeptide is Myoglobin (MB) (Vulpes chama (Cape fox)).